The following is a 388-amino-acid chain: Palmitoyltransferase ZDHHC18-B (388 aa).

The tract at residues Met1 to Arg33 is disordered. At Met1 to Gln58 the chain is on the cytoplasmic side. Residues Ser59–Phe79 form a helical membrane-spanning segment. At Asp80–His87 the chain is on the lumenal side. The helical transmembrane segment at Leu88–Leu108 threads the bilayer. Residues Gln109–Arg205 are Cytoplasmic-facing. The DHHC domain maps to Lys162–Val212. Cys192 serves as the catalytic S-palmitoyl cysteine intermediate. A helical transmembrane segment spans residues Phe206 to Thr226. Residues Thr227–Leu253 lie on the Lumenal side of the membrane. A helical transmembrane segment spans residues Val254 to Val274. The Cytoplasmic portion of the chain corresponds to Ala275–Ala388.

The protein belongs to the DHHC palmitoyltransferase family. ERF2/ZDHHC9 subfamily.

It is found in the golgi apparatus membrane. The catalysed reaction is L-cysteinyl-[protein] + hexadecanoyl-CoA = S-hexadecanoyl-L-cysteinyl-[protein] + CoA. Its function is as follows. Palmitoyltransferase that catalyzes the addition of palmitate onto various protein substrates, such as CGAS, HRAS and LCK. In Danio rerio (Zebrafish), this protein is Palmitoyltransferase ZDHHC18-B.